We begin with the raw amino-acid sequence, 144 residues long: MPKNKGKGGKNRKRGKNEADDDKRELVFKEDGQEYAQVTRMLGNGRCEAICVDGTKRLCHIRGKMHKKVWIAAGDIVLVGLRDYQDDKADVILKYMNDEARLLKAYGELPDTVRLNEGVDVDGPEEGEGDSDYIQFEDEDIDKI.

Residues 1 to 15 show a composition bias toward basic residues; that stretch reads MPKNKGKGGKNRKRG. Disordered regions lie at residues 1-25 and 120-144; these read MPKN…DKRE and DVDG…IDKI. The span at 16 to 25 shows a compositional bias: basic and acidic residues; that stretch reads KNEADDDKRE. Residues 22 to 96 form the S1-like domain; that stretch reads DKRELVFKED…DKADVILKYM (75 aa).

Belongs to the eIF-1A family.

In terms of biological role, seems to be required for maximal rate of protein biosynthesis. Enhances ribosome dissociation into subunits and stabilizes the binding of the initiator Met-tRNA(I) to 40 S ribosomal subunits. The chain is Eukaryotic translation initiation factor 1A from Triticum aestivum (Wheat).